The primary structure comprises 57 residues: Aspartyl-phosphate phosphatase YnzD (57 aa).

It belongs to the spo0E family.

Aspartyl-phosphate phosphatase which specifically dephosphorylates the sporulation transcription factor Spo0A-P and negatively regulates the sporulation initiation pathway in order to control the proper timing of sporulation. In Bacillus subtilis (strain 168), this protein is Aspartyl-phosphate phosphatase YnzD (ynzD).